The following is a 397-amino-acid chain: Acylalkylpyrone synthase csyB (397 aa).

Residues Lys-50 and 50-57 (KMLEINRK) contribute to the CoA site. Cys-155 acts as the Nucleophile in catalysis. 214–215 (GD) provides a ligand contact to substrate. Residues Ile-267, Gly-312, 312 to 315 (GGYA), Tyr-314, and Ala-315 contribute to the CoA site. Residue His-377 is part of the active site.

This sequence belongs to the thiolase-like superfamily. Chalcone/stilbene synthases family. Homodimer.

Acylalkylpyrone synthase that catalyzes not only the polyketide chain elongation but also the one-pot condensation of two beta-ketoacyl units to produce the 3-acyl-4-hydroxy-6-alkyl-alpha-pyrone (AcAP) scaffold, a precursor of csypyrone B. The enzyme reaction is initiated by the loading of acetoacetyl-CoA onto Cys-155, and subsequent thioester bond cleavage by the nucleophilic water generates the beta-keto acid intermediate, which is placed within a pocket. The second beta-ketoacyl unit is then produced by polyketide chain elongation of fatty acyl-CoA with one molecule of malonyl-CoA, and the condensation with the beta-ketoacid generates the final products. Csypyrone B1 is the major product and contains a propanoic acid side-chain, whereas csypyrones B2 and B3 are minor compounds that contain butyric or pentanoic acid side-chains, respectively. This is Acylalkylpyrone synthase csyB from Aspergillus oryzae (strain ATCC 42149 / RIB 40) (Yellow koji mold).